Reading from the N-terminus, the 282-residue chain is Bifunctional protein FolD (282 aa).

NADP(+) is bound by residues 164–166 (GRS) and Ser-189.

This sequence belongs to the tetrahydrofolate dehydrogenase/cyclohydrolase family. Homodimer.

It catalyses the reaction (6R)-5,10-methylene-5,6,7,8-tetrahydrofolate + NADP(+) = (6R)-5,10-methenyltetrahydrofolate + NADPH. It carries out the reaction (6R)-5,10-methenyltetrahydrofolate + H2O = (6R)-10-formyltetrahydrofolate + H(+). The protein operates within one-carbon metabolism; tetrahydrofolate interconversion. Functionally, catalyzes the oxidation of 5,10-methylenetetrahydrofolate to 5,10-methenyltetrahydrofolate and then the hydrolysis of 5,10-methenyltetrahydrofolate to 10-formyltetrahydrofolate. The protein is Bifunctional protein FolD of Lactobacillus gasseri (strain ATCC 33323 / DSM 20243 / BCRC 14619 / CIP 102991 / JCM 1131 / KCTC 3163 / NCIMB 11718 / NCTC 13722 / AM63).